We begin with the raw amino-acid sequence, 1978 residues long: Protein MOR1 (1978 aa).

2 HEAT repeats span residues Asp-48–Ser-86 and Ile-165–Lys-202. The segment at Ala-230–Val-264 is disordered. Residues Ile-238–Glu-247 are compositionally biased toward basic and acidic residues. 3 HEAT repeats span residues Gly-322–Thr-359, Ala-363–Leu-400, and Lys-442–Met-479. The disordered stretch occupies residues Ile-501–Pro-587. Over residues Ala-510–Gly-527 the composition is skewed to low complexity. The segment covering Gly-565–Lys-577 has biased composition (basic and acidic residues). HEAT repeat units follow at residues Asp-849–Lys-886, Pro-890–Pro-928, Lys-932–Leu-969, and Val-1008–Gln-1045. Residues Ser-1087–Gly-1115 are disordered. The span at Ile-1093–Arg-1107 shows a compositional bias: polar residues. HEAT repeat units lie at residues Leu-1230–Ala-1253, Glu-1254–Gln-1286, Ala-1287–Thr-1325, and Gly-1328–Ala-1365. A compositionally biased stretch (basic and acidic residues) spans Met-1393–Glu-1403. The tract at residues Met-1393 to Pro-1431 is disordered. The HEAT 14 repeat unit spans residues Arg-1535–Asp-1575. The tract at residues Ala-1837–Asp-1862 is disordered.

Belongs to the TOG/XMAP215 family. In terms of tissue distribution, expressed in roots, cotyledons, rosette leaves, stems, open flowers and green siliques.

The protein resides in the cytoplasm. It localises to the cytoskeleton. Its subcellular location is the phragmoplast. It is found in the spindle. Its function is as follows. Microtubule-binding protein that is essential for cortical microtubules organization and function. Essential for maintaining the interphase cortical array and for correct morphogenesis. Promotes rapid growth and shrinkage of microtubules and suppresses the pausing of interphase microtubules. Regulates the structure and function of microtubule arrays during mitosis and cytokinesis. Probably not required for cellulose microfibrils alignment in roots. This is Protein MOR1 (MOR1) from Arabidopsis thaliana (Mouse-ear cress).